The chain runs to 657 residues: Tyramine beta-hydroxylase (657 aa).

The helical transmembrane segment at 77–97 threads the bilayer; it reads VALLFLLVAYCGGVVHAGEIV. The DOMON domain occupies 103 to 214; that stretch reads TNVTVKWHTD…GTTQFYIAAS (112 aa). N-linked (GlcNAc...) asparagine glycans are attached at residues Asn104 and Asn143. Tyr278 is an active-site residue. 2 disulfide bridges follow: Cys280–Cys330 and Cys319–Cys342. Cu(2+) contacts are provided by His312 and His313. Positions 380, 458, 460, and 533 each coordinate Cu(2+). Disulfide bonds link Cys437–Cys549, Cys441–Cys606, and Cys512–Cys534. Residue His458 is part of the active site. Residue Asn555 is glycosylated (N-linked (GlcNAc...) asparagine).

This sequence belongs to the copper type II ascorbate-dependent monooxygenase family. Cu(2+) is required as a cofactor. As to expression, present in synaptic regions of RIC interneurons. Present in gonadal sheath cells of hermaphrodites (at protein level).

Its subcellular location is the membrane. It carries out the reaction tyramine + L-ascorbate + O2 = (R)-octopamine + L-dehydroascorbate + H2O. Required for the conversion of tyramine to octopamine, a precursor of octapamine but probably itself a neurotransmitter. Involved in the regulation of egg laying, which is inhibited by tyramine. Due to its involvement in octopamine biosynthesis, also required for crtc-1-dependent regulation of AMPK-mediated longevity. In Caenorhabditis elegans, this protein is Tyramine beta-hydroxylase.